Reading from the N-terminus, the 396-residue chain is Serine/threonine-protein kinase 32A (396 aa).

G2 is lipidated: N-myristoyl glycine. The region spanning 23–281 (FEILRAIGKG…LSDVQNFPYM (259 aa)) is the Protein kinase domain. ATP is bound by residues 29–37 (IGKGSFGKV) and K52. D146 acts as the Proton acceptor in catalysis. Residues 373–396 (KRQPNLALEQTKDPQGEDGQNNNL) are disordered.

This sequence belongs to the protein kinase superfamily. Ser/Thr protein kinase family. The cofactor is Mg(2+).

The protein localises to the cell membrane. It catalyses the reaction L-seryl-[protein] + ATP = O-phospho-L-seryl-[protein] + ADP + H(+). It carries out the reaction L-threonyl-[protein] + ATP = O-phospho-L-threonyl-[protein] + ADP + H(+). The polypeptide is Serine/threonine-protein kinase 32A (STK32A) (Homo sapiens (Human)).